A 762-amino-acid polypeptide reads, in one-letter code: MENLKSASPEEDSPRHGDNMGKPKRIPRACDMCRKRKIRCDGKQPACSNCVSHGIPCVFTARPKRRTGQRQMYIKSLVSRLEQMESTLRSVIPNYDQQPDIIHPSSTPKNYHDLNCTKGETSSDDSTDDIAFLNEKMGTLVTTPIGSQKYFGSSSTFSIIQHAAKFASGVESDKVLEHLSMAKSGCLFDPDESFDGSKAELPSSEIANIYIDAYFKSYNPLFPVFTRENFYQKFGSPNCFKKPDGSIDLVNYASYVVVLSLGCLAIADTEEQVSRANALFKNTLGISIEVTKDMSFRTLVFNFLTSVYYCAVSKPNAVWLNVGVVVRVAQTLGLHRNSAMWSIGKEDAEEKARLFWYIYYLDRVSSMMTGKPVAFQDDDIDQMVPFYSIYCYYGLKPPEGDPLGTFNFLEAEVQLTRIVGQVLKELYSVSGMKSNSSQVMEKILEFDLLLNNWYNSLPDCMQPRNRFKIPKFCSSNLILTSAIYYSCLILIHRHSLTKNLQVNCVHRGTGSITDSQALCIAAARSITNLFVESVDLQPLIMKIIMYHAFTSSIIIFISILKRPLASICSEDLNCLISVKNRLISFETHGFVRLNVVMDALESMISTAQAAMQKAKQIAINFSSNLATNEDVTNSGMPDIADVSLKSQSHVPPRISSNHSDTSVKSNSPSSIFDNSGYLNSLNNSILQMHQNLQNSSNTNDQYKFDSVQENELHANITPVLDQTMSMFPFKDQLDLNFAAANVYNPNVFDDMGLDCSFYGNGL.

Positions 1–26 are disordered; it reads MENLKSASPEEDSPRHGDNMGKPKRI. The segment covering 12-21 has biased composition (basic and acidic residues); it reads DSPRHGDNMG. The zn(2)-C6 fungal-type DNA-binding region spans 30-57; it reads CDMCRKRKIRCDGKQPACSNCVSHGIPC. Positions 647–668 are disordered; the sequence is QSHVPPRISSNHSDTSVKSNSP.

It localises to the nucleus. This is an uncharacterized protein from Schizosaccharomyces pombe (strain 972 / ATCC 24843) (Fission yeast).